The chain runs to 477 residues: Aspartyl/glutamyl-tRNA(Asn/Gln) amidotransferase subunit B (477 aa).

This sequence belongs to the GatB/GatE family. GatB subfamily. Heterotrimer of A, B and C subunits.

It carries out the reaction L-glutamyl-tRNA(Gln) + L-glutamine + ATP + H2O = L-glutaminyl-tRNA(Gln) + L-glutamate + ADP + phosphate + H(+). The catalysed reaction is L-aspartyl-tRNA(Asn) + L-glutamine + ATP + H2O = L-asparaginyl-tRNA(Asn) + L-glutamate + ADP + phosphate + 2 H(+). In terms of biological role, allows the formation of correctly charged Asn-tRNA(Asn) or Gln-tRNA(Gln) through the transamidation of misacylated Asp-tRNA(Asn) or Glu-tRNA(Gln) in organisms which lack either or both of asparaginyl-tRNA or glutaminyl-tRNA synthetases. The reaction takes place in the presence of glutamine and ATP through an activated phospho-Asp-tRNA(Asn) or phospho-Glu-tRNA(Gln). This Clostridium tetani (strain Massachusetts / E88) protein is Aspartyl/glutamyl-tRNA(Asn/Gln) amidotransferase subunit B.